Reading from the N-terminus, the 432-residue chain is Glutamyl-tRNA reductase (432 aa).

Residues 49–52, Ser-107, 112–114, and Gln-118 each bind substrate; these read TCNR and ETQ. Catalysis depends on Cys-50, which acts as the Nucleophile. 186–191 is an NADP(+) binding site; sequence GAGEMG.

Belongs to the glutamyl-tRNA reductase family. In terms of assembly, homodimer.

It catalyses the reaction (S)-4-amino-5-oxopentanoate + tRNA(Glu) + NADP(+) = L-glutamyl-tRNA(Glu) + NADPH + H(+). The protein operates within porphyrin-containing compound metabolism; protoporphyrin-IX biosynthesis; 5-aminolevulinate from L-glutamyl-tRNA(Glu): step 1/2. Functionally, catalyzes the NADPH-dependent reduction of glutamyl-tRNA(Glu) to glutamate 1-semialdehyde (GSA). This is Glutamyl-tRNA reductase from Campylobacter jejuni (strain RM1221).